The sequence spans 326 residues: MAFISFPPRHPSSSARLPLTLIALDDWALSTITGVDSEKYIQGQVTADVSQMTEQQHLLAAHCDAKGKMWSTLRLFRERDGFAWIERRSVLEAQLTELKKYAVFSKVVIAPDDERVLLGVAGFQARAALANVFSELPNSENQVVRDGASTLLWFEHPAERFLLVTDVATANMLTEKLHGEAELNNSQQWLALDIEAGIPVIDAANSGQFIPQATNLQALGGISFKKGCYTGQEMVARAKFRGANKRALWLLAGKASRVPEAGEDLELQMGENWRRTGAILAATQLDDGQLLVQAVMNNDLEAESVFRVRDDANTLHIVPLPYSLEE.

Positions 27 and 189 each coordinate folate.

This sequence belongs to the tRNA-modifying YgfZ family.

Its subcellular location is the cytoplasm. Folate-binding protein involved in regulating the level of ATP-DnaA and in the modification of some tRNAs. It is probably a key factor in regulatory networks that act via tRNA modification, such as initiation of chromosomal replication. The chain is tRNA-modifying protein YgfZ from Salmonella typhimurium (strain LT2 / SGSC1412 / ATCC 700720).